Reading from the N-terminus, the 535-residue chain is Interferon lambda receptor 1 (535 aa).

The signal sequence occupies residues 1-20 (MWRADRWAPLLLFLLQSALG). Residues 21–227 (RPRLAPPRNV…FLEAPGDKRA (207 aa)) are Extracellular-facing. The 96-residue stretch at 26 to 121 (PPRNVTLFSQ…ESRYLEYLFD (96 aa)) folds into the Fibronectin type-III domain. N-linked (GlcNAc...) asparagine glycosylation is found at N29, N36, and N52. 3 disulfides stabilise this stretch: C73/C81, C85/C149, and C194/C216. N141 carries N-linked (GlcNAc...) asparagine glycosylation. A helical transmembrane segment spans residues 228–248 (VLAMPSLLLLLIAAVAAGVAW). Residues 249–535 (KIMKGNPWFQ…GRMLGDYLVR (287 aa)) lie on the Cytoplasmic side of the membrane. Disordered stretches follow at residues 301 to 419 (NRPA…APCG) and 478 to 520 (VNNP…SSVQ). The segment covering 321–336 (STEDEDEDTDYDDDGD) has biased composition (acidic residues). A compositionally biased stretch (basic and acidic residues) spans 350 to 360 (EKPRVMEHSET). The segment covering 376–396 (GSDGSSAWDSSDRSWSSTGDS) has biased composition (low complexity). The span at 397–414 (SYKDEVGSSSCLDRKEPD) shows a compositional bias: basic and acidic residues. Acidic residues predominate over residues 482–503 (EGEEEQEDEEEEEEEEEEEDWE).

This sequence belongs to the type II cytokine receptor family. Heterodimer with IL10RB. Ubiquitinated by FBXO45-containing E3 ligase leading to proteasomal degradation.

The protein resides in the membrane. Functionally, the IFNLR1/IL10RB dimer is a receptor for the cytokine ligands IFNL2 and IFNL3 and mediates their antiviral activity. The ligand/receptor complex stimulate the activation of the JAK/STAT signaling pathway leading to the expression of IFN-stimulated genes (ISG), which contribute to the antiviral state. Determines the cell type specificity of the lambda interferon action. Shows a more restricted pattern of expression in the epithelial tissues thereby limiting responses to lambda interferons primarily to epithelial cells of the respiratory, gastrointestinal, and reproductive tracts. Seems not to be essential for early virus-activated host defense in vaginal infection, but plays an important role in Toll-like receptor (TLR)-induced antiviral defense. Plays a significant role in the antiviral immune defense in the intestinal epithelium. The protein is Interferon lambda receptor 1 (Ifnlr1) of Mus musculus (Mouse).